A 274-amino-acid polypeptide reads, in one-letter code: Long chain fatty acid elongase 5 (274 aa).

Residues 1 to 23 lie on the Extracellular side of the membrane; that stretch reads MMDQILGTNFTYEGAKEVARGLE. Residues 24–44 traverse the membrane as a helical segment; it reads GFSAKLAVGYIATIFGLKYYM. Residues 45–61 lie on the Cytoplasmic side of the membrane; it reads KDRKAFDLSTPLNIWNG. A helical membrane pass occupies residues 62–82; that stretch reads ILSTFSLLGFLFTFPTLLSVI. The Extracellular portion of the chain corresponds to 83–105; sequence RKDGFSHTYSHVSELYTDSTSGY. The helical transmembrane segment at 106–126 threads the bilayer; sequence WIFLWVISKIPELLDTVFIVL. At 127 to 129 the chain is on the cytoplasmic side; it reads RKR. Residues 130-150 traverse the membrane as a helical segment; it reads PLIFMHWYHHALTGYYALVCY. The Extracellular portion of the chain corresponds to 151–156; that stretch reads HEDAVH. The helical transmembrane segment at 157–177 threads the bilayer; that stretch reads MVWVVWMNYIIHAFMYGYYLL. Residues 178–187 are Cytoplasmic-facing; the sequence is KSLKVPIPPS. A helical membrane pass occupies residues 188 to 208; the sequence is VAQAITTSQMVQFAVAIFAQV. Residues 209 to 227 are Extracellular-facing; the sequence is HVSYKHYVEGVEGLAYSFR. A helical membrane pass occupies residues 228-248; that stretch reads GTAIGFFMLTTYFYLWIQFYK. The Cytoplasmic portion of the chain corresponds to 249-274; that stretch reads EHYLKNGGKKYNLAKDQAKTQTKKAN.

The protein belongs to the ELO family. Expressed in the gut and unidentified head cells.

It is found in the membrane. The enzyme catalyses 11-methyldodecanoyl-CoA + malonyl-CoA + H(+) = 3-oxoisopentadecanoyl-CoA + CO2 + CoA. The catalysed reaction is isopentadecanoyl-CoA + malonyl-CoA + H(+) = 3-oxoisoheptadecanoyl-CoA + CO2 + CoA. It functions in the pathway lipid metabolism; fatty acid biosynthesis. Catalyzes the first and rate-limiting reaction of the four reactions that constitute the long-chain fatty acids elongation cycle. Uses malonyl-CoA to add 2 carbons per cycle to the chain of long-chain fatty acids. Condensing enzyme required for the formation of isopentadecanoate (C15iso) and isoheptadecanoate (C17iso), both play critical roles in animal development and growth. The chain is Long chain fatty acid elongase 5 from Caenorhabditis elegans.